Here is a 244-residue protein sequence, read N- to C-terminus: Small ribosomal subunit protein eS4 (244 aa).

The S4 RNA-binding domain occupies 37–123; sequence VPLAILLKYY…AKYKFVRIMN (87 aa).

Belongs to the eukaryotic ribosomal protein eS4 family.

In Sulfolobus acidocaldarius (strain ATCC 33909 / DSM 639 / JCM 8929 / NBRC 15157 / NCIMB 11770), this protein is Small ribosomal subunit protein eS4 (rps4e).